The primary structure comprises 62 residues: Potassium channel toxin alpha-KTx 10.1 (62 aa).

The first 22 residues, 1 to 22 (MEGIAKITLILLFLFVTMHTFA), serve as a signal peptide directing secretion. Residues 23-28 (NWNTEA) constitute a propeptide that is removed on maturation. Cystine bridges form between C31/C50, C36/C55, and C40/C57. Y60 carries the tyrosine amide modification.

It belongs to the short scorpion toxin superfamily. Potassium channel inhibitor family. Alpha-KTx 10 subfamily. As to expression, expressed by the venom gland.

The protein resides in the secreted. Its function is as follows. Blocks Shaker B (Sh) and voltage-gated potassium-channels Kv1.1/KCNA1, Kv1.2/KCNA2, Kv1.3/KCNA3. Also inhibits small conductance calcium-activated potassium channels (KCNN) and intermediate conductance calcium-activated potassium channel (KCa3.1/KCNN4). In Centruroides noxius (Mexican scorpion), this protein is Potassium channel toxin alpha-KTx 10.1.